The primary structure comprises 212 residues: Imidazole glycerol phosphate synthase subunit HisH (212 aa).

Positions 2 to 212 (QTAIIDYGMG…LTMLKNFLNW (211 aa)) constitute a Glutamine amidotransferase type-1 domain. Cysteine 85 functions as the Nucleophile in the catalytic mechanism. Catalysis depends on residues histidine 194 and glutamate 196.

In terms of assembly, heterodimer of HisH and HisF.

The protein resides in the cytoplasm. It catalyses the reaction 5-[(5-phospho-1-deoxy-D-ribulos-1-ylimino)methylamino]-1-(5-phospho-beta-D-ribosyl)imidazole-4-carboxamide + L-glutamine = D-erythro-1-(imidazol-4-yl)glycerol 3-phosphate + 5-amino-1-(5-phospho-beta-D-ribosyl)imidazole-4-carboxamide + L-glutamate + H(+). The catalysed reaction is L-glutamine + H2O = L-glutamate + NH4(+). It participates in amino-acid biosynthesis; L-histidine biosynthesis; L-histidine from 5-phospho-alpha-D-ribose 1-diphosphate: step 5/9. Functionally, IGPS catalyzes the conversion of PRFAR and glutamine to IGP, AICAR and glutamate. The HisH subunit catalyzes the hydrolysis of glutamine to glutamate and ammonia as part of the synthesis of IGP and AICAR. The resulting ammonia molecule is channeled to the active site of HisF. The polypeptide is Imidazole glycerol phosphate synthase subunit HisH (hisH) (Neisseria meningitidis serogroup B (strain ATCC BAA-335 / MC58)).